Reading from the N-terminus, the 164-residue chain is UPF0114 protein YqhA (164 aa).

3 helical membrane passes run 15-35, 53-73, and 136-156; these read LLAP…LKFF, LILV…LVMV, and LMWY…MGYL.

Belongs to the UPF0114 family.

Its subcellular location is the cell membrane. The chain is UPF0114 protein YqhA from Salmonella dublin (strain CT_02021853).